The chain runs to 348 residues: Protein arginine N-methyltransferase 1 (348 aa).

In terms of domain architecture, SAM-dependent MTase PRMT-type spans 24–342 (KDYYFDSYAH…KGEVCDLNEQ (319 aa)). S-adenosyl-L-methionine contacts are provided by histidine 37, arginine 46, glycine 70, glutamate 92, and glutamate 121. Residues glutamate 139 and glutamate 148 contribute to the active site.

The protein belongs to the class I-like SAM-binding methyltransferase superfamily. Protein arginine N-methyltransferase family. As to quaternary structure, interacts with daf-16. Interacts with pgl-1 and pgl-3. Interacts with alg-1. Widely expressed in pharyngeal, body wall muscle, intestinal and vulval cells.

It localises to the cytoplasm. It is found in the nucleus. The catalysed reaction is L-arginyl-[protein] + 2 S-adenosyl-L-methionine = N(omega),N(omega)-dimethyl-L-arginyl-[protein] + 2 S-adenosyl-L-homocysteine + 2 H(+). The enzyme catalyses L-arginyl-[protein] + S-adenosyl-L-methionine = N(omega)-methyl-L-arginyl-[protein] + S-adenosyl-L-homocysteine + H(+). In terms of biological role, arginine methyltransferase that methylates (mono and asymmetric dimethylation) the guanidino nitrogens of arginyl residues present in target proteins. Catalyzes the formation of monomethylarginine and asymmetric dimethylarginine on histones H2A and H4, a specific tag for epigenetic transcriptional activation. Catalyzes asymmetric arginine dimethylation of mitochondrial proteins necessary for mitochondrial oxidative phosphorylation activity and thus aerobic respiration and ATP synthesis, and the mitochondrial stress response. Methylates arginine residues in P-granule components pgl-1 and pgl-3 to promote P-granule degradation by autophagy in somatic cells to ensure exclusive localization of the P-granules in germ cells. Modulates the interaction of P-granule proteins epg-2 and sepa-1. Methylates arginine residues in daf-16, which blocks ftt-2 binding to daf-16, prevents akt-mediated phosphorylation and allows for daf-16 to translocate to the nucleus. In turn, association with daf-16 therefore allows for the transcriptional activation of daf-16 and regulation of longevity-related genes. Maintains lifespan by modulating daf-16 activity downstream of the daf-2 signaling pathway. Plays a role in heat and oxidative stress resistance. Role in stress resistance and also fat storage may be in association with the daf-2 signaling pathway. Required for normal feeding behavior. The chain is Protein arginine N-methyltransferase 1 from Caenorhabditis elegans.